The primary structure comprises 569 residues: Urease subunit alpha (569 aa).

The Urease domain occupies 131–569 (GGIDTHIHFI…LPLAQRYLLL (439 aa)). Residues His136, His138, and Lys219 each coordinate Ni(2+). Position 219 is an N6-carboxylysine (Lys219). His221 lines the substrate pocket. Ni(2+)-binding residues include His248 and His274. His322 acts as the Proton donor in catalysis. Asp362 serves as a coordination point for Ni(2+).

It belongs to the metallo-dependent hydrolases superfamily. Urease alpha subunit family. Heterotrimer of UreA (gamma), UreB (beta) and UreC (alpha) subunits. Three heterotrimers associate to form the active enzyme. Ni cation is required as a cofactor. Post-translationally, carboxylation allows a single lysine to coordinate two nickel ions.

The protein localises to the cytoplasm. The enzyme catalyses urea + 2 H2O + H(+) = hydrogencarbonate + 2 NH4(+). It functions in the pathway nitrogen metabolism; urea degradation; CO(2) and NH(3) from urea (urease route): step 1/1. The sequence is that of Urease subunit alpha from Parasynechococcus marenigrum (strain WH8102).